We begin with the raw amino-acid sequence, 178 residues long: Translation initiation factor IF-3 (178 aa).

This sequence belongs to the IF-3 family. In terms of assembly, monomer.

The protein localises to the cytoplasm. Its function is as follows. IF-3 binds to the 30S ribosomal subunit and shifts the equilibrium between 70S ribosomes and their 50S and 30S subunits in favor of the free subunits, thus enhancing the availability of 30S subunits on which protein synthesis initiation begins. In Legionella pneumophila (strain Paris), this protein is Translation initiation factor IF-3.